We begin with the raw amino-acid sequence, 367 residues long: tRNA 2-selenouridine synthase (367 aa).

A Rhodanese domain is found at 12–135 (FLSGVAMLDV…MRGFLIETTD (124 aa)). Catalysis depends on cysteine 95, which acts as the S-selanylcysteine intermediate.

The protein belongs to the SelU family. As to quaternary structure, monomer.

The enzyme catalyses 5-methylaminomethyl-2-thiouridine(34) in tRNA + selenophosphate + (2E)-geranyl diphosphate + H2O + H(+) = 5-methylaminomethyl-2-selenouridine(34) in tRNA + (2E)-thiogeraniol + phosphate + diphosphate. The catalysed reaction is 5-methylaminomethyl-2-thiouridine(34) in tRNA + (2E)-geranyl diphosphate = 5-methylaminomethyl-S-(2E)-geranyl-thiouridine(34) in tRNA + diphosphate. It carries out the reaction 5-methylaminomethyl-S-(2E)-geranyl-thiouridine(34) in tRNA + selenophosphate + H(+) = 5-methylaminomethyl-2-(Se-phospho)selenouridine(34) in tRNA + (2E)-thiogeraniol. It catalyses the reaction 5-methylaminomethyl-2-(Se-phospho)selenouridine(34) in tRNA + H2O = 5-methylaminomethyl-2-selenouridine(34) in tRNA + phosphate. Functionally, involved in the post-transcriptional modification of the uridine at the wobble position (U34) of tRNA(Lys), tRNA(Glu) and tRNA(Gln). Catalyzes the conversion of 2-thiouridine (S2U-RNA) to 2-selenouridine (Se2U-RNA). Acts in a two-step process involving geranylation of 2-thiouridine (S2U) to S-geranyl-2-thiouridine (geS2U) and subsequent selenation of the latter derivative to 2-selenouridine (Se2U) in the tRNA chain. The sequence is that of tRNA 2-selenouridine synthase from Cupriavidus necator (strain ATCC 17699 / DSM 428 / KCTC 22496 / NCIMB 10442 / H16 / Stanier 337) (Ralstonia eutropha).